Reading from the N-terminus, the 440-residue chain is Beta-1,3-galactosyl-O-glycosyl-glycoprotein beta-1,6-N-acetylglucosaminyltransferase (440 aa).

Residues 1–9 are Cytoplasmic-facing; it reads MKMAGWKKK. A helical; Signal-anchor for type II membrane protein membrane pass occupies residues 10-30; that stretch reads LCPGHHLWALGCYMLLAVVSL. At 31–440 the chain is on the lumenal side; sequence RLSLRFKCDV…RHKAIYGTEL (410 aa). Residues N72 and N108 are each glycosylated (N-linked (GlcNAc...) asparagine; by host). Disulfide bonds link C73–C230, C164–C384, C185–C212, and C393–C425.

This sequence belongs to the glycosyltransferase 14 family.

It is found in the host Golgi apparatus membrane. It catalyses the reaction a 3-O-[beta-D-galactosyl-(1-&gt;3)-N-acetyl-alpha-D-galactosaminyl]-L-seryl-[protein] + UDP-N-acetyl-alpha-D-glucosamine = 3-O-{beta-D-galactosyl-(1-&gt;3)-[N-acetyl-beta-D-glucosaminyl-(1-&gt;6)]-N-acetyl-alpha-D-galactosaminyl}-L-seryl-[protein] + UDP + H(+). The enzyme catalyses a 3-O-[beta-D-galactosyl-(1-&gt;3)-N-acetyl-alpha-D-galactosaminyl]-L-threonyl-[protein] + UDP-N-acetyl-alpha-D-glucosamine = a 3-O-{beta-D-galactosyl-(1-&gt;3)-[N-acetyl-beta-D-glucosaminyl-(1-&gt;6)]-N-acetyl-alpha-D-galactosaminyl}-L-threonyl-[protein] + UDP + H(+). It carries out the reaction a beta-D-Gal-(1-&gt;4)-beta-D-GlcNAc-(1-&gt;3)-beta-D-Gal-(1-&gt;4)-beta-D-GlcNAc derivative + UDP-N-acetyl-alpha-D-glucosamine = a beta-D-Gal-(1-&gt;4)-beta-D-GlcNAc-(1-&gt;3)-[beta-D-GlcNAc-(1-&gt;6)]-beta-D-Gal-(1-&gt;4)-N-acetyl-beta-D-glucosaminyl derivative + UDP + H(+). The catalysed reaction is 3-O-[N-acetyl-beta-D-glucosaminyl-(1-&gt;3)-N-acetyl-alpha-D-galactosaminyl]-L-seryl-[protein] + UDP-N-acetyl-alpha-D-glucosamine = 3-O-[N-acetyl-beta-D-glucosaminyl-(1-&gt;3)-[N-acetyl-beta-D-glucosaminyl-(1-&gt;6)]-N-acetyl-alpha-D-galactosaminyl]-L-seryl-[protein] + UDP + H(+). It catalyses the reaction a 3-O-[N-acetyl-beta-D-glucosaminyl-(1-&gt;3)-N-acetyl-alpha-D-galactosaminyl]-L-threonyl-[protein] + UDP-N-acetyl-alpha-D-glucosamine = 3-O-[N-acetyl-beta-D-glucosaminyl-(1-&gt;3)-[N-acetyl-beta-D-glucosaminyl-(1-&gt;6)]-N-acetyl-alpha-D-galactosaminyl]-L-threonyl-[protein] + UDP + H(+). Its pathway is protein modification; protein glycosylation. Functionally, non-essential glycosyltransferase that can synthesize all known mucin beta 6 N-acetylglucosaminides. Mediates core 2 and core 4 O-glycan branching, 2 important steps in mucin-type biosynthesis. Has also I-branching enzyme activity by converting linear into branched poly-N-acetyllactosaminoglycans. Contributes to the post-translational modifications of structural proteins. The polypeptide is Beta-1,3-galactosyl-O-glycosyl-glycoprotein beta-1,6-N-acetylglucosaminyltransferase (Bo17) (Bovine herpesvirus 4 (strain LVR140) (BoHV-4)).